The chain runs to 609 residues: UvrABC system protein C (609 aa).

The GIY-YIG domain maps to 16-94 (HLPGVYRHLD…IKSLRPRYNI (79 aa)). One can recognise a UVR domain in the interval 203 to 238 (REVMDEIEARMLQASTELRFEEAAVLRDQMGSLSKV).

This sequence belongs to the UvrC family. Interacts with UvrB in an incision complex.

It is found in the cytoplasm. The UvrABC repair system catalyzes the recognition and processing of DNA lesions. UvrC both incises the 5' and 3' sides of the lesion. The N-terminal half is responsible for the 3' incision and the C-terminal half is responsible for the 5' incision. This is UvrABC system protein C from Bordetella pertussis (strain Tohama I / ATCC BAA-589 / NCTC 13251).